Reading from the N-terminus, the 88-residue chain is UPF0297 protein str1959 (88 aa).

The protein belongs to the UPF0297 family.

The protein is UPF0297 protein str1959 of Streptococcus thermophilus (strain CNRZ 1066).